A 36-amino-acid polypeptide reads, in one-letter code: Photosystem II reaction center protein M (36 aa).

The chain crosses the membrane as a helical span at residues I5–I25.

This sequence belongs to the PsbM family. PSII is composed of 1 copy each of membrane proteins PsbA, PsbB, PsbC, PsbD, PsbE, PsbF, PsbH, PsbI, PsbJ, PsbK, PsbL, PsbM, PsbT, PsbX, PsbY, PsbZ, Psb30/Ycf12, at least 3 peripheral proteins of the oxygen-evolving complex and a large number of cofactors. It forms dimeric complexes.

It localises to the plastid. The protein resides in the chloroplast thylakoid membrane. Its function is as follows. One of the components of the core complex of photosystem II (PSII). PSII is a light-driven water:plastoquinone oxidoreductase that uses light energy to abstract electrons from H(2)O, generating O(2) and a proton gradient subsequently used for ATP formation. It consists of a core antenna complex that captures photons, and an electron transfer chain that converts photonic excitation into a charge separation. This subunit is found at the monomer-monomer interface. This chain is Photosystem II reaction center protein M, found in Panax ginseng (Korean ginseng).